Consider the following 100-residue polypeptide: MSHVDVTVDEATINAIRQRMLETGDWERIQKLLRAHLEESGWVDDLKDLAKEKARAQDVPNLENLVKQISESAAGMVSDNVKRDVMLEIESVLDREVDQA.

It belongs to the ENY2 family. Component of the nuclear pore complex (NPC)-associated TREX-2 complex (transcription and export complex 2), composed of at least SUS1, SAC3, THP1, SEM1, and CDC31. TREX-2 contains 2 SUS1 chains. The TREX-2 complex interacts with the nucleoporin NUP1. Component of the 1.8 MDa SAGA transcription coactivator-HAT complex. SAGA is built of 5 distinct domains with specialized functions. Within the SAGA complex, SUS1, SGF11, SGF73 and UBP8 form an additional subcomplex of SAGA called the DUB module (deubiquitination module). Interacts directly with THP1, SAC3, SGF11, and with the RNA polymerase II.

Its subcellular location is the nucleus. The protein resides in the nucleoplasm. It localises to the cytoplasm. It is found in the P-body. Functionally, involved in mRNA export coupled transcription activation by association with both the TREX-2 and the SAGA complexes. At the promoters, SAGA is required for recruitment of the basal transcription machinery. It influences RNA polymerase II transcriptional activity through different activities such as TBP interaction and promoter selectivity, interaction with transcription activators, and chromatin modification through histone acetylation and deubiquitination. Within the SAGA complex, participates in a subcomplex required for deubiquitination of H2B and for the maintenance of steady-state H3 methylation levels. The TREX-2 complex functions in docking export-competent ribonucleoprotein particles (mRNPs) to the nuclear entrance of the nuclear pore complex (nuclear basket). TREX-2 participates in mRNA export and accurate chromatin positioning in the nucleus by tethering genes to the nuclear periphery. May also be involved in cytoplasmic mRNA decay by interaction with components of P-bodies. This is Transcription and mRNA export factor SUS1 from Cryptococcus neoformans var. neoformans serotype D (strain B-3501A) (Filobasidiella neoformans).